The primary structure comprises 185 residues: Transcription antitermination protein NusB (185 aa).

The protein belongs to the NusB family.

In terms of biological role, involved in transcription antitermination. Required for transcription of ribosomal RNA (rRNA) genes. Binds specifically to the boxA antiterminator sequence of the ribosomal RNA (rrn) operons. The sequence is that of Transcription antitermination protein NusB from Rhodospirillum rubrum (strain ATCC 11170 / ATH 1.1.1 / DSM 467 / LMG 4362 / NCIMB 8255 / S1).